Here is a 596-residue protein sequence, read N- to C-terminus: Sphingomyelinase C 1 (596 aa).

Positions 1–36 (MITKRNIPCKKNWKYKKKSISLTLITICYMFLFLTS) are cleaved as a signal peptide. The tract at residues 63-118 (KIEDSTNTDPSSNVNEEDENSINANANDNAPSDSDSSNPRSPDKNPVNPTSPNSSS) is disordered. Residues 67 to 76 (STNTDPSSNV) show a composition bias toward polar residues. Residues 83–118 (SINANANDNAPSDSDSSNPRSPDKNPVNPTSPNSSS) show a composition bias toward low complexity.

The protein resides in the secreted. It catalyses the reaction a sphingomyelin + H2O = phosphocholine + an N-acylsphing-4-enine + H(+). The polypeptide is Sphingomyelinase C 1 (sph1) (Leptospira interrogans serogroup Icterohaemorrhagiae serovar copenhageni (strain Fiocruz L1-130)).